Here is a 586-residue protein sequence, read N- to C-terminus: MEGSNCSLRVNRQLLDPKFESYKLSLDPLPCYNVELDAAVAEVCLRDDQYTLDHMRAFGMYNYLHCNPWIPNSVFYVDQLERVMSFTVTLDTAMGKPIEVFRFPRDLNTCDSRLCSSMYFASAQWVTLSDGTGTLYIIRIGNQSGSVSGKWEIMFNQELGEPFIVVHSVSSVRDELHIIDVLLLSIEKDESDIKGSGFHVCLEWVSIARAQNEDNGKYEILKRRKLFGKSVPHYAAIEPLGNGVMMISYKPFRFIANDKDQPESSEDEKMDEDNKREPLYNWHQTGEDVTLTFQLPEGMTKEDLTIKFLPGEIDISLKDQGTFLKGQLYLDIDCESSAWIIKEGRSVEVTLTKREPGSTWAELVIGDKHGEYIVDPTQTAAIAEQLMHLTSEDMNPNPETEKPPCNAQELEECDLFLEDSTSLCRFDGARLKATHVVNLGSNPYLFTFVATPELMPCFALRHDVDALLWQPVSEQADNLWDHIATFNALGYVQASKQDKKFFTCAPNFSYSALCECVRRIFIYRQPTPVSTELYNRKEGRRVGQVAKQQVASLETTDPIVGFQASNERLFVLTTKKLSVIKVNSTD.

Residues 259-278 (KDQPESSEDEKMDEDNKREP) are disordered. The region spanning 275 to 364 (KREPLYNWHQ…EPGSTWAELV (90 aa)) is the CS domain.

It localises to the cytoplasm. Its subcellular location is the nucleus. The protein is NudC domain-containing protein 1 of Xenopus tropicalis (Western clawed frog).